The following is a 116-amino-acid chain: Mercuric transport protein MerT (116 aa).

2 consecutive transmembrane segments (helical) span residues leucine 16–phenylalanine 36 and valine 46–tryptophan 66. Hg(2+)-binding residues include cysteine 24 and cysteine 25. Positions 76 and 82 each coordinate Hg(2+). A helical transmembrane segment spans residues isoleucine 94–phenylalanine 114.

This sequence belongs to the MerT family.

Its subcellular location is the cell inner membrane. Functionally, involved in mercury resistance. Probably transfers a mercuric ion from the periplasmic Hg(2+)-binding protein MerP to the cytoplasmic mercuric reductase MerA. The sequence is that of Mercuric transport protein MerT from Serratia marcescens.